We begin with the raw amino-acid sequence, 816 residues long: Cation/H(+) antiporter 8 (816 aa).

The next 12 helical transmembrane spans lie at 64 to 84 (PKLE…NILF), 97 to 117 (MMLA…NSII), 127 to 147 (IDVA…LKGV), 163 to 183 (VTGV…FNLK), 197 to 214 (VMLL…ARLL), 227 to 247 (VALS…IANV), 255 to 275 (ADGL…FAVV), 297 to 317 (IHGV…LSQF), 343 to 363 (LESF…MLRT), 382 to 402 (FAVA…SVIV), 413 to 433 (SIIL…FYLF), and 447 to 467 (ILVL…GFLY).

Belongs to the monovalent cation:proton antiporter 2 (CPA2) transporter (TC 2.A.37) family. CHX (TC 2.A.37.4) subfamily. As to expression, specifically expressed in pollen.

The protein localises to the membrane. May operate as a cation/H(+) antiporter. The chain is Cation/H(+) antiporter 8 (CHX8) from Arabidopsis thaliana (Mouse-ear cress).